The primary structure comprises 354 residues: Protein RecA (354 aa).

67–74 (GPESSGKT) is a binding site for ATP.

This sequence belongs to the RecA family.

It localises to the cytoplasm. In terms of biological role, can catalyze the hydrolysis of ATP in the presence of single-stranded DNA, the ATP-dependent uptake of single-stranded DNA by duplex DNA, and the ATP-dependent hybridization of homologous single-stranded DNAs. It interacts with LexA causing its activation and leading to its autocatalytic cleavage. This is Protein RecA from Hamiltonella defensa subsp. Acyrthosiphon pisum (strain 5AT).